The primary structure comprises 352 residues: Putative conjugal transfer protein MT3759 (352 aa).

Position 160-167 (160-167 (GGTGAGKT)) interacts with ATP.

The protein belongs to the GSP E family.

It localises to the cytoplasm. The chain is Putative conjugal transfer protein MT3759 from Mycobacterium tuberculosis (strain CDC 1551 / Oshkosh).